The sequence spans 529 residues: Keratin, type II cytoskeletal 74 (529 aa).

The segment at 1-139 (MSRQLNIKSS…DPEIQKVRAQ (139 aa)) is head. Positions 140 to 175 (EREQIKVLNDKFASFIDKVRFLEQQNQVLETKWELL) are coil 1A. In terms of domain architecture, IF rod spans 140-453 (EREQIKVLND…KLLEGEECRM (314 aa)). A linker 1 region spans residues 176-194 (QQLDLNNCKKNLEPILEGY). Positions 195-286 (ISNLRKQLET…CLYDAEIAQI (92 aa)) are coil 1B. Residues 287-310 (QTHASETSVILSMDNNRDLDLDSI) form a linker 12 region. The coil 2 stretch occupies residues 311–449 (IAEVRMHYEE…ATYRKLLEGE (139 aa)). Residues 450–529 (ECRMSGENPS…ASIPARKATR (80 aa)) form a tail region. Positions 484 to 500 (GASAVAGSSGSTQSGQT) are enriched in low complexity. Positions 484-529 (GASAVAGSSGSTQSGQTKTTEARGGDLKDTQGKSTPASIPARKATR) are disordered. Over residues 503 to 514 (TEARGGDLKDTQ) the composition is skewed to basic and acidic residues. Position 513 is a phosphothreonine (threonine 513).

Belongs to the intermediate filament family. In terms of assembly, heterotetramer of two type I and two type II keratins. As to expression, highly expressed in hair follicles from scalp. In hair, it is specifically present in the inner root sheath (IRS) of the hair follicle. Present in the IRS Huxley layer, but not in Henle layer or cuticle of the IRS. In the IRS Huxley layer, it is expressed in specialized Huxley cells, termed 'Fluegelzellen, along the area of differentiated Henle cells (at protein level).

Functionally, has a role in hair formation. Specific component of keratin intermediate filaments in the inner root sheath (IRS) of the hair follicle. The chain is Keratin, type II cytoskeletal 74 (KRT74) from Homo sapiens (Human).